We begin with the raw amino-acid sequence, 203 residues long: Small ribosomal subunit protein uS4 (203 aa).

The 64-residue stretch at 93 to 156 folds into the S4 RNA-binding domain; it reads RRLDNVVYRL…MKVPAILEAV (64 aa).

The protein belongs to the universal ribosomal protein uS4 family. In terms of assembly, part of the 30S ribosomal subunit. Contacts protein S5. The interaction surface between S4 and S5 is involved in control of translational fidelity.

Its function is as follows. One of the primary rRNA binding proteins, it binds directly to 16S rRNA where it nucleates assembly of the body of the 30S subunit. In terms of biological role, with S5 and S12 plays an important role in translational accuracy. This Streptococcus pyogenes serotype M49 (strain NZ131) protein is Small ribosomal subunit protein uS4.